Here is a 447-residue protein sequence, read N- to C-terminus: Probable tRNA methyltransferase 9B (447 aa).

Ser212 bears the Phosphoserine mark. 2 disordered regions span residues Ala274–Asp306 and Trp320–Asp348. The span at Ala276–Arg286 shows a compositional bias: polar residues.

The protein belongs to the methyltransferase superfamily.

Its function is as follows. May modify wobble uridines in specific arginine and glutamic acid tRNAs. Acts as a tumor suppressor by promoting the expression of LIN9. In Mus musculus (Mouse), this protein is Probable tRNA methyltransferase 9B (Trmt9b).